Reading from the N-terminus, the 1385-residue chain is MGALPCPAHIEHHQGLSSFGTRRVLRQSVACGAHRSRRRSLWAGASPGAPKYDEGALSCSFQLGSASLHVSEVRGSRHATPRAPPTGGCIELPKTLALTEEQDQRAARATSQLLNAISRCAAGSPLARLLTGPHGAASATGAGSHSSSAGAPTPTPRPDIAAAAALLPSLTWRWVSVADLEGGWVDRGVAHLLREALLVQKAASDVNASVSELVGWCMDNCSAPAAALAALWGQQQGAALPARSRSFYGLLLQRLDGGGASSAVAAAAGRQPHEHQQERSSAEAYGLSPALVFCSSVARTALSTSSRRGGRSSSSEEDGDAHDDRSHPHTQQLLEQDGSEPLVGAAASPSSNGKRSAAGPSAGADVILVGELPGDVLLDESVGNVRRQQPHANGSGAKHNGVNGSGKSGSGGAKVAHAHVNGSAADTDPGQAALGVKGSAESPLEQPAPAAKRSAAGKASRPAALLLKRPSRSAAPPAPTLPDGAEADGFASDGSGLPGHGQQQLSAIAAAAAASSLLAGPAAPMSFLETLSDDDDEARRAASLLNGAGMSDPASASSTSTSSNSGTSNLVGRVFVPMRLVSVSRFPLRDALGRPLPDGLAVPPTGPIVLSNDARVFPGTEGLLSDYATPAGDKLAVRLEYITDRSYAYGDVALQLFNISRVTRKRTDNCQMLVNGKPVNVGDPGVPLVPGDEIRFGASAAFAFRLEALPEAPSGLEAAVQQLQLHADSSSSNGNGSGSSSSSGLPQVSEEEVAAAAADMASLSNMSRRDPPRAEALLRRLLAARPGDAALWLIWAQMAARVEGPGPGQAKARMLFRAAADAARRMPVLPPPPLALQMAARRATGAGRRRRRGASTTASMDGDDGALSVADGSSSADAAIDPASGASPSAAAGPPAPSARPRHNWLLVQALGNWGKHEWRLRMYGSARHLFRAAADEAARHSGGLAAGGGGAVMHYWGSRELEAGNVRNARIVAAEALRKCPADVALYVLAASVELEASNLELAKGYCQRAYALDRTDKQLFLIWPRVEAGLGDRDKARLLFERALDAHPLNTKIINMYARFEAEEGSYREAAELYDRALQIDPLSPGPGVHNRADWASMETDLGNTGLARQLLEEGLEAHPNSAALLVVYSKLQRLEGRYQEALAAVRRAQAVAGAFNAAVMNERAQVLRALGERELAANLSRHVSAVKQLNRMKQQGYWGSEAWRAFVEATRTPEQRTLVAAARAHRLQLGWAPAVRGAKPGPPPGVVAGDGRRPAAPETQQWMALEELRRQRAEARRLTAQRTARLRAEEAAAAAGGGEAGAAAAAAALAMGSTGSMGSMDGDEGYDDEIQDPVMYGADLGSGPLPRRRLEDQDADYYEEPESMALPPLDAVRRPMPDADDM.

A chloroplast-targeting transit peptide spans 1 to 45 (MGALPCPAHIEHHQGLSSFGTRRVLRQSVACGAHRSRRRSLWAGA). Residues 132–152 (GPHGAASATGAGSHSSSAGAP) are compositionally biased toward low complexity. 7 disordered regions span residues 132–157 (GPHGAASATGAGSHSSSAGAPTPTPR), 263–282 (AVAAAAGRQPHEHQQERSSA), 304–360 (TSSR…AAGP), 387–502 (RQQP…GHGQ), 546–568 (NGAGMSDPASASSTSTSSNSGTS), 726–756 (HADSSSSNGNGSGSSSSSGLPQVSEEEVAAA), and 840–899 (ARRA…APSA). Basic and acidic residues predominate over residues 271–281 (QPHEHQQERSS). A compositionally biased stretch (low complexity) spans 304–313 (TSSRRGGRSS). The span at 403 to 412 (NGSGKSGSGG) shows a compositional bias: gly residues. 4 stretches are compositionally biased toward low complexity: residues 448–464 (APAAKRSAAGKASRPAA), 554–568 (ASASSTSTSSNSGTS), 729–744 (SSSSNGNGSGSSSSSG), and 854–893 (ASTTASMDGDDGALSVADGSSSADAAIDPASGASPSAAAG). TPR repeat units lie at residues 851–884 (RRGASTTASMDGDDGALSVADGSSSADAAIDPAS), 951–984 (GAVMHYWGSRELEAGNVRNARIVAAEALRKCPAD), 985–1018 (VALYVLAASVELEASNLELAKGYCQRAYALDRTD), 1019–1052 (KQLFLIWPRVEAGLGDRDKARLLFERALDAHPLN), 1053–1086 (TKIINMYARFEAEEGSYREAAELYDRALQIDPLS), 1091–1124 (VHNRADWASMETDLGNTGLARQLLEEGLEAHPNS), 1125–1158 (AALLVVYSKLQRLEGRYQEALAAVRRAQAVAGAF), 1160–1193 (AAVMNERAQVLRALGERELAANLSRHVSAVKQLN), and 1205–1238 (AWRAFVEATRTPEQRTLVAAARAHRLQLGWAPAV). Disordered stretches follow at residues 1237–1257 (AVRGAKPGPPPGVVAGDGRRP) and 1333–1385 (IQDP…ADDM). Over residues 1356–1365 (QDADYYEEPE) the composition is skewed to acidic residues. The span at 1374–1385 (AVRRPMPDADDM) shows a compositional bias: basic and acidic residues.

Part of 2 complexes of about 600 and less than 2000 kDa, both of which also contain non-polysomal RNA.

The protein localises to the plastid. It is found in the chloroplast stroma. Its function is as follows. Involved, directly or indirectly, in the processing of the chloroplast encoded psbD mRNA to its mature form, acting via the 5'-UTR of the psbD mRNA. The last 588 amino acids of the protein are sufficient to confer stability on the transcript in vivo. The chain is PsbD mRNA maturation factor Nac2, chloroplastic (NAC2) from Chlamydomonas reinhardtii (Chlamydomonas smithii).